A 627-amino-acid chain; its full sequence is DNA-directed RNA polymerase subunit gamma (627 aa).

The Zn(2+) site is built by cysteine 70, cysteine 72, cysteine 85, and cysteine 88. Positions 468, 470, and 472 each coordinate Mg(2+).

This sequence belongs to the RNA polymerase beta' chain family. RpoC1 subfamily. In terms of assembly, in cyanobacteria the RNAP catalytic core is composed of 2 alpha, 1 beta, 1 beta', 1 gamma and 1 omega subunit. When a sigma factor is associated with the core the holoenzyme is formed, which can initiate transcription. The cofactor is Mg(2+). It depends on Zn(2+) as a cofactor.

It catalyses the reaction RNA(n) + a ribonucleoside 5'-triphosphate = RNA(n+1) + diphosphate. In terms of biological role, DNA-dependent RNA polymerase catalyzes the transcription of DNA into RNA using the four ribonucleoside triphosphates as substrates. The polypeptide is DNA-directed RNA polymerase subunit gamma (Synechococcus sp. (strain JA-3-3Ab) (Cyanobacteria bacterium Yellowstone A-Prime)).